Here is a 424-residue protein sequence, read N- to C-terminus: G1/S-specific cyclin-E (424 aa).

The disordered stretch occupies residues 1 to 25 (MSRRSGRLQSRQDNQPLTECISDEN). Positions 7–17 (RLQSRQDNQPL) are enriched in polar residues. Position 411 is a phosphothreonine (threonine 411).

Belongs to the cyclin family. Cyclin E subfamily. In terms of assembly, interacts with a member of the CDK2/CDK protein kinases to form a serine/threonine kinase holoenzyme complex. The cyclin subunit imparts substrate specificity to the complex.

Its subcellular location is the nucleus. Its function is as follows. Essential for the control of the cell cycle at the G1/S (start) transition. This chain is G1/S-specific cyclin-E (CYCE), found in Hemicentrotus pulcherrimus (Sea urchin).